Reading from the N-terminus, the 539-residue chain is Phosphoenolpyruvate carboxykinase (ATP) (539 aa).

Substrate-binding residues include Arg-61, Tyr-195, and Lys-201. Residues Lys-201, His-220, and 238 to 246 (GLSGTGKTT) contribute to the ATP site. Positions 201 and 220 each coordinate Mn(2+). Asp-259 lines the Mn(2+) pocket. Residues Glu-287, Arg-325, and Thr-450 each contribute to the ATP site. Arg-325 contributes to the substrate binding site.

This sequence belongs to the phosphoenolpyruvate carboxykinase (ATP) family. Requires Mn(2+) as cofactor.

It is found in the cytoplasm. The enzyme catalyses oxaloacetate + ATP = phosphoenolpyruvate + ADP + CO2. It functions in the pathway carbohydrate biosynthesis; gluconeogenesis. Its function is as follows. Involved in the gluconeogenesis. Catalyzes the conversion of oxaloacetate (OAA) to phosphoenolpyruvate (PEP) through direct phosphoryl transfer between the nucleoside triphosphate and OAA. In Methylorubrum populi (strain ATCC BAA-705 / NCIMB 13946 / BJ001) (Methylobacterium populi), this protein is Phosphoenolpyruvate carboxykinase (ATP).